Reading from the N-terminus, the 698-residue chain is Inner centromere protein SLI15 (698 aa).

Ser268 is subject to Phosphoserine. Disordered regions lie at residues 365–390 (KNKI…FDKT), 405–444 (EQKK…EVKN), and 455–474 (RPTK…TSQT). Composition is skewed to polar residues over residues 422–439 (RPHS…SSPS) and 459–474 (ASIS…TSQT). At Ser489 the chain carries Phosphoserine. The segment at 535-560 (IMRSQQEHHRRKQEKQKRMSHLEQDL) is disordered. Over residues 550 to 560 (QKRMSHLEQDL) the composition is skewed to basic and acidic residues.

Belongs to the INCENP family. In terms of assembly, component of the CPC complex at least composed of IPL1, BIR1 and SLI15. Phosphorylated by serine/threonine protein kinase IPL1.

The protein resides in the nucleus. It is found in the cytoplasm. Its subcellular location is the cytoskeleton. The protein localises to the spindle. It localises to the chromosome. The protein resides in the centromere. It is found in the kinetochore. In terms of biological role, component of the chromosomal passenger complex (CPC), a complex that acts as a key regulator of mitosis. Stimulates IPL1 kinase activity and facilitates its association with the mitotic spindle. Has a role in attaching the kinetochores to the microtubules and ensuring that sister kinetochores connect to opposite poles. In Saccharomyces cerevisiae (strain ATCC 204508 / S288c) (Baker's yeast), this protein is Inner centromere protein SLI15 (SLI15).